Here is a 68-residue protein sequence, read N- to C-terminus: uncharacterized protein (68 aa).

Positions 1–27 (MKGLLCFIYILSAILIGCVFLNKDVEA) are cleaved as a signal peptide.

This is an uncharacterized protein from Invertebrate iridescent virus 6 (IIV-6).